A 572-amino-acid chain; its full sequence is Phosphoenolpyruvate-protein phosphotransferase (572 aa).

His-190 (tele-phosphohistidine intermediate) is an active-site residue. 2 residues coordinate phosphoenolpyruvate: Arg-297 and Arg-333. Positions 427 and 451 each coordinate Mg(2+). Phosphoenolpyruvate contacts are provided by residues 450–451 (ND) and Arg-461. Cys-498 acts as the Proton donor in catalysis.

It belongs to the PEP-utilizing enzyme family. Homodimer. Mg(2+) is required as a cofactor.

It localises to the cytoplasm. The catalysed reaction is L-histidyl-[protein] + phosphoenolpyruvate = N(pros)-phospho-L-histidyl-[protein] + pyruvate. Functionally, general (non sugar-specific) component of the phosphoenolpyruvate-dependent sugar phosphotransferase system (sugar PTS). This major carbohydrate active-transport system catalyzes the phosphorylation of incoming sugar substrates concomitantly with their translocation across the cell membrane. Enzyme I transfers the phosphoryl group from phosphoenolpyruvate (PEP) to the phosphoryl carrier protein (HPr). In Mycoplasma genitalium (strain ATCC 33530 / DSM 19775 / NCTC 10195 / G37) (Mycoplasmoides genitalium), this protein is Phosphoenolpyruvate-protein phosphotransferase (ptsI).